Here is a 248-residue protein sequence, read N- to C-terminus: Homeotic protein ultrabithorax (248 aa).

Over residues 116–125 (GTGGGGGGSA) the composition is skewed to gly residues. Residues 116-191 (GTGGGGGGSA…GSAGVVGGAG (76 aa)) are disordered. Low complexity predominate over residues 126-139 (GSANGANNTANGQN). Composition is skewed to gly residues over residues 140-152 (TSGGGGAGGGGGM) and 182-191 (GSAGVVGGAG). Positions 241–246 (FYPWMA) match the Antp-type hexapeptide motif.

It belongs to the Antp homeobox family.

It is found in the nucleus. In terms of biological role, sequence-specific transcription factor which is part of a developmental regulatory system that provides cells with specific positional identities on the anterior-posterior axis. Binds the consensus region 5'-TTAAT[GT][GA]-3'. The protein is Homeotic protein ultrabithorax (Ubx) of Musca domestica (House fly).